A 633-amino-acid chain; its full sequence is DNA mismatch repair protein MutL (633 aa).

2 disordered regions span residues 336 to 364 (VRPDDQLAPPGATSLTEPRPTGAAAGEFG) and 384 to 405 (GWSGGASSSGASSGYSAYTRPE). The segment covering 388–401 (GASSSGASSGYSAY) has biased composition (low complexity).

The protein belongs to the DNA mismatch repair MutL/HexB family.

Functionally, this protein is involved in the repair of mismatches in DNA. It is required for dam-dependent methyl-directed DNA mismatch repair. May act as a 'molecular matchmaker', a protein that promotes the formation of a stable complex between two or more DNA-binding proteins in an ATP-dependent manner without itself being part of a final effector complex. This is DNA mismatch repair protein MutL from Pseudomonas paraeruginosa (strain DSM 24068 / PA7) (Pseudomonas aeruginosa (strain PA7)).